Reading from the N-terminus, the 581-residue chain is Alpha-amylase 2 (581 aa).

The signal sequence occupies residues 1–24; it reads MNYRRNICLRIGWMLLFAFIPAYA. An intrachain disulfide couples Cys-56 to Cys-64. Substrate is bound at residue Trp-109. Asn-147 contributes to the Ca(2+) binding site. The cysteines at positions 176 and 191 are disulfide-linked. Asp-202 contributes to the Ca(2+) binding site. Arg-231 contacts substrate. Ca(2+) contacts are provided by Asp-233, His-237, and Glu-257. Asp-233 serves as the catalytic Nucleophile. 236-237 is a binding site for substrate; the sequence is KH. Glu-257 (proton donor) is an active-site residue. Gly-261 lines the substrate pocket. Residues Cys-267 and Cys-311 are joined by a disulfide bond. The N-linked (GlcNAc...) asparagine glycan is linked to Asn-291. Asp-325 contacts substrate. Residue Asn-332 is glycosylated (N-linked (GlcNAc...) asparagine). Arg-372 contacts substrate. A lipid anchor (GPI-anchor amidated serine) is attached at Ser-551. The propeptide at 552–581 is removed in mature form; the sequence is EAKTIRSFTKLKLFILLIAVPFALPMIILI.

The protein belongs to the glycosyl hydrolase 13 family. Requires Ca(2+) as cofactor.

It localises to the cell membrane. The catalysed reaction is Endohydrolysis of (1-&gt;4)-alpha-D-glucosidic linkages in polysaccharides containing three or more (1-&gt;4)-alpha-linked D-glucose units.. The polypeptide is Alpha-amylase 2 (aah2) (Schizosaccharomyces pombe (strain 972 / ATCC 24843) (Fission yeast)).